A 375-amino-acid polypeptide reads, in one-letter code: Tubulinyl-Tyr carboxypeptidase 1 (375 aa).

Residues 1 to 33 (MPGGKKVVPSGSSSASPNAAATTTAAAAAAAAA) show a composition bias toward low complexity. The tract at residues 1–69 (MPGGKKVVPS…EEDLRDGGVP (69 aa)) is disordered. The segment covering 53–63 (EEPEEEGEEDL) has biased composition (acidic residues). Catalysis depends on residues Cys-179, His-214, and Ser-231. The interval 309-375 (RDMRLKIGKG…PDLSGYQIRV (67 aa)) is disordered. The segment at 329 to 375 (KKDVSSPQRAQSSPHRRNSRSERRPSGEKKPAEPKAMPDLSGYQIRV) is involved in heparin-binding and antiangiogenic activity. Residues 347–361 (SRSERRPSGEKKPAE) show a composition bias toward basic and acidic residues.

The protein belongs to the transglutaminase-like superfamily. Vasohibin family. In terms of assembly, interacts with SVBP; interaction enhances VASH1 tyrosine carboxypeptidase activity. In terms of processing, ubiquitinated in vitro. In terms of tissue distribution, expressed at low level in proliferating endothelial cells at the sprouting front but highly expressed in nonproliferating endothelial cells in the termination zone.

It localises to the cytoplasm. The protein localises to the secreted. The catalysed reaction is C-terminal L-alpha-aminoacyl-L-glutamyl-L-glutamyl-L-tyrosyl-[tubulin] + H2O = C-terminal L-alpha-aminoacyl-L-glutamyl-L-glutamyl-[tubulin] + L-tyrosine. Tyrosine carboxypeptidase that removes the C-terminal tyrosine residue of alpha-tubulin, thereby regulating microtubule dynamics and function. Acts as an angiogenesis inhibitor: inhibits migration, proliferation and network formation by endothelial cells as well as angiogenesis. This inhibitory effect is selective to endothelial cells as it does not affect the migration of smooth muscle cells or fibroblasts. The chain is Tubulinyl-Tyr carboxypeptidase 1 from Mus musculus (Mouse).